A 52-amino-acid polypeptide reads, in one-letter code: Alpha-crystallin B chain (52 aa).

It belongs to the small heat shock protein (HSP20) family. As to quaternary structure, homodimer. Aggregates with homologous proteins, including alpha-A-crystallin and the small heat shock protein HSPB1, to form large heteromeric complexes.

Functionally, may contribute to the transparency and refractive index of the lens. The chain is Alpha-crystallin B chain (CRYAB) from Trachemys scripta elegans (Red-eared slider turtle).